The following is a 479-amino-acid chain: PRAME family member 18 (479 aa).

The stretch at 15-38 is one LRR 1 repeat; sequence QSLLRDQALAISVLDELPRELFPP. One copy of the LRR 1; degenerate repeat lies at 97–124; that stretch reads RWKLQVLEMRDVDENFWTIWSGARLLSC. Residues 179–203 form an LRR 2; degenerate repeat; the sequence is HLCCTKVVNYSMSILNFRNILETVY. One copy of the LRR 3; degenerate repeat lies at 204 to 230; that stretch reads PDSIQVLEIWNMCWLCMIVEFSRYLSQ. Residues 231–265 form an LRR 4; degenerate repeat; the sequence is MRNLRKLFISDGCRYLLSSDSQEQLVAEFSSVLLR. LRR repeat units follow at residues 266–291, 292–323, 324–342, 348–375, and 376–400; these read LENL…IRCL, RSPL…SQLK, QLNL…PLRA, AATL…ALSR, and CSNL…LLRH.

This sequence belongs to the PRAME family.

The protein is PRAME family member 18 of Homo sapiens (Human).